The primary structure comprises 547 residues: Probable terpene synthase 3 (547 aa).

Mg(2+) contacts are provided by aspartate 298, aspartate 302, and glutamate 451. The short motif at 298-302 is the DDXXD motif element; the sequence is DDIYD.

This sequence belongs to the terpene synthase family. It depends on Mg(2+) as a cofactor.

Its function is as follows. Probable sesquiterpene synthase. The polypeptide is Probable terpene synthase 3 (TPS3) (Ricinus communis (Castor bean)).